Reading from the N-terminus, the 367-residue chain is 3-dehydroquinate synthase (367 aa).

NAD(+) is bound by residues 99–103 (GVVGD), 123–124 (TT), Lys136, Lys145, and 163–166 (FLRT). Positions 178, 242, and 259 each coordinate Zn(2+).

The protein belongs to the sugar phosphate cyclases superfamily. Dehydroquinate synthase family. Co(2+) is required as a cofactor. Zn(2+) serves as cofactor. It depends on NAD(+) as a cofactor.

It is found in the cytoplasm. It catalyses the reaction 7-phospho-2-dehydro-3-deoxy-D-arabino-heptonate = 3-dehydroquinate + phosphate. The protein operates within metabolic intermediate biosynthesis; chorismate biosynthesis; chorismate from D-erythrose 4-phosphate and phosphoenolpyruvate: step 2/7. In terms of biological role, catalyzes the conversion of 3-deoxy-D-arabino-heptulosonate 7-phosphate (DAHP) to dehydroquinate (DHQ). The sequence is that of 3-dehydroquinate synthase from Chlorobaculum parvum (strain DSM 263 / NCIMB 8327) (Chlorobium vibrioforme subsp. thiosulfatophilum).